The following is a 571-amino-acid chain: Pectinesterase/pectinesterase inhibitor (571 aa).

Residues 27-178 are pectinesterase inhibitor; sequence NSHQKAVESL…KILSSNAIDI (152 aa). Residues 233–254 are disordered; it reads AQAGRPGAPADEGIGEGGGGGG. The interval 259–558 is pectinesterase; that stretch reads THVVAKDGSG…TVANWLTPAN (300 aa). Thr336 and Gln366 together coordinate substrate. Asp389 functions as the Proton donor; for pectinesterase activity in the catalytic mechanism. Asp410 functions as the Nucleophile; for pectinesterase activity in the catalytic mechanism. Residues Arg479 and Trp481 each contribute to the substrate site.

It in the N-terminal section; belongs to the PMEI family. In the C-terminal section; belongs to the pectinesterase family.

Its subcellular location is the secreted. It is found in the cell wall. The enzyme catalyses [(1-&gt;4)-alpha-D-galacturonosyl methyl ester](n) + n H2O = [(1-&gt;4)-alpha-D-galacturonosyl](n) + n methanol + n H(+). The protein operates within glycan metabolism; pectin degradation; 2-dehydro-3-deoxy-D-gluconate from pectin: step 1/5. Acts in the modification of cell walls via demethylesterification of cell wall pectin. The chain is Pectinesterase/pectinesterase inhibitor from Brassica campestris (Field mustard).